A 204-amino-acid polypeptide reads, in one-letter code: Transcriptional regulator GfcR (204 aa).

The protein belongs to the purine/pyrimidine phosphoribosyltransferase family. GfcR subfamily.

This Methanoculleus marisnigri (strain ATCC 35101 / DSM 1498 / JR1) protein is Transcriptional regulator GfcR.